We begin with the raw amino-acid sequence, 1131 residues long: MKRKSPLQVQALEGFYLEQMYPTPKEMEDLGKSLGLTLKEVRGWFKRRRSRGKGVKSMANDGLGAKNPQLYDRSLMRSSTSSRCVGVAVEERCIVGTRKASCQNLLPSSHILAKVFRKDGPSLGSEFDHLPSGARKASWLGTSSVGQQKQKVARKRKISELMDHTSQDCIQENATVMKHGIGKGLMTVWRVMNPNRRDVSPCVDLLDERATLPQSSARNPPHQKKKQRQLASILKQKLLQKRSTEKKRRSIHREAELNKDETQREFKENCELAADGEVFKETCQTISTLVDDEELEMRERHERGNPLTCSCHHPSSGSHGCFLCKGIAMRSSDSSLLFPDLLPKFPPNSVQMRMPFGLHPWNSSPESVKKLFKVVHFLYTYSVTLDIGPFTLDEFTRAFHDKDSLLLGKIHLSLLKLLLLDVETELERGSFSNLSISCKFLALLQSVESQILILDMWRNSLNSLTWTELLRQILVAAGYGSLKCAVQSEELSKERKLMKKYGLRLGTLKGELFRMLNGQGNNGLKISELADAPEVAVLNLATVPEERENSICSTLASDITLFEKISESTYRVRVNCFSEDPDKSQSDSDDSGSVDDESDDCSISSGDEIEHVSENPALRKVKCRKRRKHKSKMREVCSEIDESHPGEPWLLGLMEGEYSDLSVEEKLDVFVALIDLLSSGSTIRMEDLPRAVADCAPSIYSHGSGGKIKRSSSNQYSYPRGSWVHGGELYGIKALSKSSDSHPVDSSSIVGAFAKLAGNRANNVHPMQSVYLGSDRRFNRYWLFLGTCNANDPGHRCVFFESSEDGHWEVINNKEALRALLSVLDDRGRREARLIESLEKRESFLCQAMLSRQVTQSETAHFTDIVREDSSSPVSDIDNNLCLNEIANDQFSSQHAAIVFEIGSKREKSLLWSLIQEFDDWIWANFNFNLNSVKHRRRSYLDSLTRCKSCHDLYWRDEKHCKICHATFEVDIDLEERYAIHAATCMRKEECDTFPDHKVLSSQLQSLKAAVYAIESAMPEDALIGAWRKSAHRLWAKRLRRSSSVSEITQVIGDFVGAINEEWLWHCSDQGQTLMGEIINCFPSMPQTTSAIALWLVKLDTLIAPYVEKAPPERDQPLCRTRNTSRRASKR.

Residues 2–56 constitute a DNA-binding region (homeobox; TALE-type); it reads KRKSPLQVQALEGFYLEQMYPTPKEMEDLGKSLGLTLKEVRGWFKRRRSRGKGVK. Residues 239-251 are compositionally biased toward basic residues; the sequence is LQKRSTEKKRRSI. The interval 239–264 is disordered; sequence LQKRSTEKKRRSIHREAELNKDETQR. Basic and acidic residues predominate over residues 252 to 264; that stretch reads HREAELNKDETQR. Residues 365–424 enclose the DDT domain; sequence PESVKKLFKVVHFLYTYSVTLDIGPFTLDEFTRAFHDKDSLLLGKIHLSLLKLLLLDVET. Positions 579–609 are disordered; that stretch reads EDPDKSQSDSDDSGSVDDESDDCSISSGDEI. Positions 587-600 are enriched in acidic residues; the sequence is DSDDSGSVDDESDD.

It localises to the nucleus. Functionally, transcriptional regulator required for the maintenance of the plant vegetative phase. May prevent the early activation of the vegetative-to-reproductive transition by regulating key genes that contribute to flower timing. The polypeptide is Homeobox-DDT domain protein RLT3 (Arabidopsis thaliana (Mouse-ear cress)).